An 830-amino-acid polypeptide reads, in one-letter code: Lon protease (830 aa).

Residues 20 to 215 form the Lon N-terminal domain; sequence LPAVAIRDVV…LLIKILANEV (196 aa). 367–374 lines the ATP pocket; it reads GPPGVGKT. The 180-residue stretch at 602–781 folds into the Lon proteolytic domain; it reads ENGVGISTGL…DEIVKIAFEK (180 aa). Residues serine 687 and lysine 730 contribute to the active site. The interval 784-830 is disordered; sequence PKSSFKKSKTAPKKESAKKAAKSKKPAVKKPAVKKTKQVKKTAKKKK. Residues 802 to 830 are compositionally biased toward basic residues; that stretch reads KAAKSKKPAVKKPAVKKTKQVKKTAKKKK.

The protein belongs to the peptidase S16 family. As to quaternary structure, homohexamer. Organized in a ring with a central cavity.

The protein localises to the cytoplasm. The enzyme catalyses Hydrolysis of proteins in presence of ATP.. ATP-dependent serine protease that mediates the selective degradation of mutant and abnormal proteins as well as certain short-lived regulatory proteins. Required for cellular homeostasis and for survival from DNA damage and developmental changes induced by stress. Degrades polypeptides processively to yield small peptide fragments that are 5 to 10 amino acids long. Binds to DNA in a double-stranded, site-specific manner. The sequence is that of Lon protease from Elusimicrobium minutum (strain Pei191).